The sequence spans 201 residues: MFSPLTKQLIEALQCLPGIGPKSAQRMAFHLLAKSGQAKGLALSDALQSAIRQVGECKLCQIYTEQPLCNICNNPKRDSTLLCVVESPADVVAIEQTQIYSGRYFVLHGHLSPLDGIGPQEIGIPALLDRLRNETIKELIIATNATMEGKATAHYVANHIDHTKIKCSRIAHGVPMGGELEYLDGGTLIHALHSRIPVEDN.

The C4-type zinc-finger motif lies at 57-72 (CKLCQIYTEQPLCNIC). The Toprim domain maps to 80 to 175 (TLLCVVESPA…KCSRIAHGVP (96 aa)).

It belongs to the RecR family.

In terms of biological role, may play a role in DNA repair. It seems to be involved in an RecBC-independent recombinational process of DNA repair. It may act with RecF and RecO. The sequence is that of Recombination protein RecR from Coxiella burnetii (strain RSA 493 / Nine Mile phase I).